Consider the following 311-residue polypeptide: Aspartate carbamoyltransferase catalytic subunit (311 aa).

Carbamoyl phosphate-binding residues include Arg58 and Thr59. Lys86 contributes to the L-aspartate binding site. Carbamoyl phosphate is bound by residues Arg108, His136, and Gln139. The L-aspartate site is built by Arg169 and Arg224. 2 residues coordinate carbamoyl phosphate: Gly265 and Pro266.

The protein belongs to the aspartate/ornithine carbamoyltransferase superfamily. ATCase family. As to quaternary structure, heterododecamer (2C3:3R2) of six catalytic PyrB chains organized as two trimers (C3), and six regulatory PyrI chains organized as three dimers (R2).

It catalyses the reaction carbamoyl phosphate + L-aspartate = N-carbamoyl-L-aspartate + phosphate + H(+). The protein operates within pyrimidine metabolism; UMP biosynthesis via de novo pathway; (S)-dihydroorotate from bicarbonate: step 2/3. Functionally, catalyzes the condensation of carbamoyl phosphate and aspartate to form carbamoyl aspartate and inorganic phosphate, the committed step in the de novo pyrimidine nucleotide biosynthesis pathway. This chain is Aspartate carbamoyltransferase catalytic subunit, found in Geobacter sulfurreducens (strain ATCC 51573 / DSM 12127 / PCA).